The following is a 167-amino-acid chain: Plastocyanin major isoform, chloroplastic (167 aa).

A chloroplast-targeting transit peptide spans 1–52 (MASVTSATVAIPSFTGLKASTIKSSATVRIQTAAVASPKLTVKSSLKNFGVA). The transit peptide at 53–68 (AVAAAASIALAGNAMA) directs the protein to the thylakoid. The Plastocyanin-like domain maps to 69-167 (IEVLLGGGDG…AGMVGKVTVN (99 aa)). 4 residues coordinate Cu cation: His105, Cys152, His155, and Met160.

Belongs to the plastocyanin family. Cu(2+) serves as cofactor.

It is found in the plastid. The protein localises to the chloroplast thylakoid membrane. Participates in electron transfer between P700 and the cytochrome b6-f complex in photosystem I. Seems to be the major plastocyanin in Arabidopsis. In Arabidopsis thaliana (Mouse-ear cress), this protein is Plastocyanin major isoform, chloroplastic (DRT112).